Consider the following 479-residue polypeptide: Serine protease HTRA1A (479 aa).

The N-terminal stretch at 1 to 18 (MILVTLFCICALVTSLQA) is a signal peptide. Residues 27 to 111 (VIGGCPSHCD…RGKQGVCVCK (85 aa)) form the IGFBP N-terminal domain. Disulfide bonds link C31–C56, C35–C58, C40–C59, C47–C62, C70–C87, and C81–C108. Residues 96 to 155 (SATVRRRGKQGVCVCKSSDPVCGSDGVSYRDICELKRVSNRAQSLQQPPVLFIQRGACGT) form the Kazal-like domain. Residues 203–363 (GSGFVVSDDG…IPSDKIRQFL (161 aa)) form a serine protease region. Residues H219, D249, and S327 each act as charge relay system in the active site. In terms of domain architecture, PDZ spans 364 to 466 (AESYDRLARG…LRVVVRRGNE (103 aa)).

Belongs to the peptidase S1C family. Forms homotrimers. In the presence of substrate, may form higher-order multimers in a PDZ-independent manner.

Its subcellular location is the secreted. The protein localises to the cytoplasm. The protein resides in the cytosol. In terms of biological role, serine protease with a variety of targets, including extracellular matrix proteins and proteoglycans. Through cleavage of proteoglycans, may release soluble FGF-glycosaminoglycan complexes that promote the range and intensity of FGF signals in the extracellular space. Regulates the availability of insulin-like growth factors (IGFs) by cleaving IGF-binding proteins. Inhibits signaling mediated by TGF-beta family members. Consequently, may regulate many physiological processes. Intracellularly, degrades TSC2, leading to the activation of TSC2 downstream targets. The polypeptide is Serine protease HTRA1A (htra1a) (Danio rerio (Zebrafish)).